A 231-amino-acid polypeptide reads, in one-letter code: Endonuclease NucS (231 aa).

It belongs to the NucS endonuclease family.

Its subcellular location is the cytoplasm. Its function is as follows. Cleaves both 3' and 5' ssDNA extremities of branched DNA structures. The protein is Endonuclease NucS of Micrococcus luteus (strain ATCC 4698 / DSM 20030 / JCM 1464 / CCM 169 / CCUG 5858 / IAM 1056 / NBRC 3333 / NCIMB 9278 / NCTC 2665 / VKM Ac-2230) (Micrococcus lysodeikticus).